The primary structure comprises 573 residues: Potassium-transporting ATPase potassium-binding subunit (573 aa).

Helical transmembrane passes span 6–26 (ILFALFIVTIALITKPLGSYI), 66–86 (FFSLVSFSVMAFIFVLVILLL), 135–155 (ALAVQNFVSAAVGLCVAIALI), 177–197 (VFWILLPISIVIAIVYIFQGV), 257–277 (IQMVSIFAIAAALTYTFGKWV), 283–303 (GWLIFGVMLVLFIISLVVMTI), 382–402 (IFGGVGAGFYGFFMFLMLAVF), 428–448 (MFALLISLCCVLVFTGLAAVI), 493–513 (ITIALSMLIGRFGVIFAVIML), and 537–557 (FIFAILVFFTILLIGGLTIFP).

The protein belongs to the KdpA family. In terms of assembly, the system is composed of three essential subunits: KdpA, KdpB and KdpC.

The protein resides in the cell inner membrane. Functionally, part of the high-affinity ATP-driven potassium transport (or Kdp) system, which catalyzes the hydrolysis of ATP coupled with the electrogenic transport of potassium into the cytoplasm. This subunit binds the periplasmic potassium ions and delivers the ions to the membrane domain of KdpB through an intramembrane tunnel. The polypeptide is Potassium-transporting ATPase potassium-binding subunit (Francisella tularensis subsp. tularensis (strain WY96-3418)).